Reading from the N-terminus, the 322-residue chain is 4-hydroxythreonine-4-phosphate dehydrogenase (322 aa).

Substrate is bound at residue threonine 132. A divalent metal cation is bound by residues histidine 160, histidine 205, and histidine 260. Substrate-binding residues include lysine 268, asparagine 277, and arginine 286.

It belongs to the PdxA family. As to quaternary structure, homodimer. Zn(2+) is required as a cofactor. It depends on Mg(2+) as a cofactor. Requires Co(2+) as cofactor.

It is found in the cytoplasm. The catalysed reaction is 4-(phosphooxy)-L-threonine + NAD(+) = 3-amino-2-oxopropyl phosphate + CO2 + NADH. Its pathway is cofactor biosynthesis; pyridoxine 5'-phosphate biosynthesis; pyridoxine 5'-phosphate from D-erythrose 4-phosphate: step 4/5. Its function is as follows. Catalyzes the NAD(P)-dependent oxidation of 4-(phosphooxy)-L-threonine (HTP) into 2-amino-3-oxo-4-(phosphooxy)butyric acid which spontaneously decarboxylates to form 3-amino-2-oxopropyl phosphate (AHAP). In Xanthomonas campestris pv. campestris (strain B100), this protein is 4-hydroxythreonine-4-phosphate dehydrogenase.